The chain runs to 72 residues: Putative snRNP Sm-like protein (72 aa).

Residues 4 to 72 enclose the Sm domain; that stretch reads RPLDILNNAL…RGDNVVYVSP (69 aa).

This sequence belongs to the snRNP Sm proteins family.

The chain is Putative snRNP Sm-like protein from Methanosarcina barkeri (strain Fusaro / DSM 804).